The sequence spans 93 residues: Stromal cell-derived factor 1 (93 aa).

The first 21 residues, 1 to 21 (MNAKVVVVLVLVLTALCLSDG), serve as a signal peptide directing secretion. Positions 22–23 (KP) match the Receptor activation motif motif. A receptor and heparin binding region spans residues 29–33 (RCPCR). Cystine bridges form between Cys30–Cys55 and Cys32–Cys71. Receptor binding regions lie at residues 39–41 (VAR), 48–50 (KIL), and 60–70 (VARLKNNNRQV). Residues 41 to 51 (RANVKHLKILN), Arg62, Gln69, and Lys85 contribute to the heparin site.

The protein belongs to the intercrine alpha (chemokine CxC) family. In terms of assembly, monomer or homodimer; in equilibrium. Dimer formation is induced by non acidic pH and the presence of multivalent anions, and by binding to CXCR4 or heparin. Monomeric form is required for full chemotactic activity and resistance to ischemia/reperfusion injury, whereas the dimeric form acts as a partial agonist of CXCR4, stimulating Ca2+ mobilization but with no chemotactic activity and instead acts as a selective antagonist that blocks chemotaxis induced by the monomeric form. Interacts with the N-terminus of ACKR3. Interacts with integrin subunit ITGB3 (via the allosteric site (site 2)). Interacts with TNFAIP6 (via Link domain). As to quaternary structure, (Microbial infection) Interacts with molluscum contagiosum virus protein MC148. Processed forms SDF-1-beta(3-72) and SDF-1-alpha(3-67) are produced after secretion by proteolytic cleavage of isoforms Beta and Alpha, respectively. The N-terminal processing is probably achieved by DPP4. Isoform Alpha is first cleaved at the C-terminus to yield a SDF-1-alpha(1-67) intermediate before being processed at the N-terminus. The C-terminal processing of isoform Alpha is reduced by binding to heparin and, probably, cell surface proteoglycans. Isoform Alpha and isoform Beta are ubiquitously expressed, with highest levels detected in liver, pancreas and spleen. Isoform Gamma is mainly expressed in heart, with weak expression detected in several other tissues. Isoform Delta, isoform Epsilon and isoform Theta have highest expression levels in pancreas, with lower levels detected in heart, kidney, liver and spleen.

It is found in the secreted. Functionally, chemoattractant active on T-lymphocytes and monocytes but not neutrophils. Activates the C-X-C chemokine receptor CXCR4 to induce a rapid and transient rise in the level of intracellular calcium ions and chemotaxis. SDF-1-beta(3-72) and SDF-1-alpha(3-67) show a reduced chemotactic activity. Binding to cell surface proteoglycans seems to inhibit formation of SDF-1-alpha(3-67) and thus to preserve activity on local sites. Also binds to atypical chemokine receptor ACKR3, which activates the beta-arrestin pathway and acts as a scavenger receptor for SDF-1. Binds to the allosteric site (site 2) of integrins and activates integrins ITGAV:ITGB3, ITGA4:ITGB1 and ITGA5:ITGB1 in a CXCR4-independent manner. Acts as a positive regulator of monocyte migration and a negative regulator of monocyte adhesion via the LYN kinase. Stimulates migration of monocytes and T-lymphocytes through its receptors, CXCR4 and ACKR3, and decreases monocyte adherence to surfaces coated with ICAM-1, a ligand for beta-2 integrins. SDF1A/CXCR4 signaling axis inhibits beta-2 integrin LFA-1 mediated adhesion of monocytes to ICAM-1 through LYN kinase. Inhibits CXCR4-mediated infection by T-cell line-adapted HIV-1. Plays a protective role after myocardial infarction. Induces down-regulation and internalization of ACKR3 expressed in various cells. Has several critical functions during embryonic development; required for B-cell lymphopoiesis, myelopoiesis in bone marrow and heart ventricular septum formation. Stimulates the proliferation of bone marrow-derived B-cell progenitors in the presence of IL7 as well as growth of stromal cell-dependent pre-B-cells. The protein is Stromal cell-derived factor 1 (CXCL12) of Homo sapiens (Human).